Consider the following 148-residue polypeptide: FAD synthase (148 aa).

Residues 11–12 (TF), 16–19 (HPGH), Asn94, and Tyr121 each bind ATP.

This sequence belongs to the archaeal FAD synthase family. In terms of assembly, homodimer. A divalent metal cation serves as cofactor.

It catalyses the reaction FMN + ATP + H(+) = FAD + diphosphate. It participates in cofactor biosynthesis; FAD biosynthesis; FAD from FMN: step 1/1. Catalyzes the transfer of the AMP portion of ATP to flavin mononucleotide (FMN) to produce flavin adenine dinucleotide (FAD) coenzyme. In Methanoregula boonei (strain DSM 21154 / JCM 14090 / 6A8), this protein is FAD synthase.